Here is a 551-residue protein sequence, read N- to C-terminus: Interleukin-2 receptor subunit beta (551 aa).

Positions 1–26 (MATLALSWCLPLLILLLPLATSSASA) are cleaved as a signal peptide. Topologically, residues 27 to 240 (AVNGTSRFTC…TKPAALGKDT (214 aa)) are extracellular. Residues asparagine 29, asparagine 43, and asparagine 71 are each glycosylated (N-linked (GlcNAc...) asparagine). A disulfide bond links cysteine 36 and cysteine 46. Cysteine 74 and cysteine 86 are joined by a disulfide. Residues 134–234 (APISLQVVHV…QPLAFRTKPA (101 aa)) form the Fibronectin type-III domain. A glycan (N-linked (GlcNAc...) asparagine) is linked at asparagine 149. A WSXWS motif motif is present at residues 220 to 224 (WSPWS). Residues 241–265 (IPWLGHLLVGLSGAFGFIILVYLLI) form a helical membrane-spanning segment. At 266–551 (NCRNTGPWLK…LQDQDPTHLV (286 aa)) the chain is on the cytoplasmic side. Positions 278 to 286 (LKCHTPDPS) match the Box 1 motif motif. Disordered stretches follow at residues 389-417 (EEEPDEGGADAPTGSSPQPLRPLSAEDDA), 430-484 (FSPS…DLVD), and 496-517 (AGEQVPDPGPREPFSFPWARPP).

This sequence belongs to the type I cytokine receptor family. Type 4 subfamily. In terms of assembly, non-covalent dimer of an alpha and a beta subunit. IL2R exists in 3 different forms: a high affinity dimer, an intermediate affinity monomer (beta subunit), and a low affinity monomer (alpha subunit). The high and intermediate affinity forms also associate with a gamma subunit. Interacts with SHB upon interleukin stimulation.

It is found in the cell membrane. Its subcellular location is the cell surface. Functionally, receptor for interleukin-2. This beta subunit is involved in receptor mediated endocytosis and transduces the mitogenic signals of IL2. Probably in association with IL15RA, involved in the stimulation of neutrophil phagocytosis by IL15. This Macaca fascicularis (Crab-eating macaque) protein is Interleukin-2 receptor subunit beta (IL2RB).